A 174-amino-acid polypeptide reads, in one-letter code: Nucleoside-triphosphatase THEP1 (174 aa).

ATP contacts are provided by residues 7 to 14 and 94 to 101; these read GRPGVGKT and LIIIDEIG.

Belongs to the THEP1 NTPase family.

It carries out the reaction a ribonucleoside 5'-triphosphate + H2O = a ribonucleoside 5'-diphosphate + phosphate + H(+). Functionally, has nucleotide phosphatase activity towards ATP, GTP, CTP, TTP and UTP. May hydrolyze nucleoside diphosphates with lower efficiency. The polypeptide is Nucleoside-triphosphatase THEP1 (Thermotoga sp. (strain RQ2)).